We begin with the raw amino-acid sequence, 410 residues long: BTB/POZ and MATH domain-containing protein 5 (410 aa).

Residues 1-24 (MSESVIQGSNPDRVLSPTSSKSVT) form a disordered region. The MATH domain maps to 28–162 (NGSHQFVIQG…DDCLIINCTV (135 aa)). Positions 198 to 264 (SDITFNIAGE…MYKDSLPEDV (67 aa)) constitute a BTB domain.

The protein belongs to the Tdpoz family. Heterodimer with BPM1 and BPM3. Interacts with RAP2-4. Binds to MYB56 at the promoter of FLOWERING LOCUS T (FT). As to expression, ubiquitous.

Its subcellular location is the nucleus. The protein resides in the cytoplasm. It participates in protein modification; protein ubiquitination. Its function is as follows. May act as a substrate-specific adapter of an E3 ubiquitin-protein ligase complex (CUL3-RBX1-BTB) which mediates the ubiquitination and subsequent proteasomal degradation of target proteins. The polypeptide is BTB/POZ and MATH domain-containing protein 5 (BPM5) (Arabidopsis thaliana (Mouse-ear cress)).